The chain runs to 208 residues: Recombination protein RecR (208 aa).

The C4-type zinc-finger motif lies at 57-72 (CALCNTLTEQEVCVTC). The Toprim domain occupies 80–187 (SKLCVVETPA…QVTRLARGVP (108 aa)).

Belongs to the RecR family.

May play a role in DNA repair. It seems to be involved in an RecBC-independent recombinational process of DNA repair. It may act with RecF and RecO. This chain is Recombination protein RecR, found in Polaromonas naphthalenivorans (strain CJ2).